Consider the following 402-residue polypeptide: NADH-quinone oxidoreductase subunit D (402 aa).

This sequence belongs to the complex I 49 kDa subunit family. As to quaternary structure, NDH-1 is composed of 14 different subunits. Subunits NuoB, C, D, E, F, and G constitute the peripheral sector of the complex.

The protein resides in the cell inner membrane. It catalyses the reaction a quinone + NADH + 5 H(+)(in) = a quinol + NAD(+) + 4 H(+)(out). NDH-1 shuttles electrons from NADH, via FMN and iron-sulfur (Fe-S) centers, to quinones in the respiratory chain. The immediate electron acceptor for the enzyme in this species is believed to be ubiquinone. Couples the redox reaction to proton translocation (for every two electrons transferred, four hydrogen ions are translocated across the cytoplasmic membrane), and thus conserves the redox energy in a proton gradient. This chain is NADH-quinone oxidoreductase subunit D, found in Azorhizobium caulinodans (strain ATCC 43989 / DSM 5975 / JCM 20966 / LMG 6465 / NBRC 14845 / NCIMB 13405 / ORS 571).